Here is a 381-residue protein sequence, read N- to C-terminus: MWRSLGLALALCLLPLGGTESQDQSSLCKQPPAWSIRDQGPMLNSNGSVTVVALLQASUYLCILQASKLEDLRVKLKKEGYSNISHIVVNHQGISSRLKYTHLKNKVSEHIPVYQQEENQTDVWTLLNGSKDDFLIYDRCGRLVYHLGLPFSFLTFPYVEEAVKIAYCEKKCGYCSLTTLKDEDFCKSVSLATVDKTVEAPSPHYHHEHHHNHRHQHLGSSELSENQQPGAPDAPTHPAPPGLHHHHKHKGQHRQGHPENRDMPGSEDIQDLQKKLCRKRCINQLLCKLPKDSELAPRSCCCHCRHLIFEKTGSAITUQCKENLPSLCSUQGLRAEENITESCQURLPPPAUQISQQLIPTEASTSURUKNQAKKUEUPSN.

Positions 1–19 are cleaved as a signal peptide; the sequence is MWRSLGLALALCLLPLGGT. N-linked (GlcNAc...) asparagine glycosylation occurs at N46. Residue U59 is a non-standard amino acid, selenocysteine. N-linked (GlcNAc...) asparagine glycans are attached at residues N83, N119, and N128. The disordered stretch occupies residues 202–268; the sequence is SPHYHHEHHH…ENRDMPGSED (67 aa). A compositionally biased stretch (basic residues) spans 204–217; the sequence is HYHHEHHHNHRHQH. Positions 218-229 are enriched in polar residues; that stretch reads LGSSELSENQQP. Positions 243–255 are enriched in basic residues; that stretch reads LHHHHKHKGQHRQ. At S266 the chain carries Phosphoserine. Non-standard amino acids (selenocysteine) are located at U318 and U330. N338 is a glycosylation site (N-linked (GlcNAc...) asparagine). 6 non-standard amino acids (selenocysteine) are found at residues U345, U352, U367, U369, U376, and U378. The interval 352–381 is disordered; the sequence is UQISQQLIPTEASTSURUKNQAKKUEUPSN. A compositionally biased stretch (polar residues) spans 353 to 369; that stretch reads QISQQLIPTEASTSURU.

This sequence belongs to the selenoprotein P family. In terms of processing, phosphorylation sites are present in the extracellular medium.

The protein localises to the secreted. Its function is as follows. Might be responsible for some of the extracellular antioxidant defense properties of selenium or might be involved in the transport of selenium. May supply selenium to tissues such as brain and testis. In Pongo abelii (Sumatran orangutan), this protein is Selenoprotein P.